A 428-amino-acid chain; its full sequence is Aerobic C4-dicarboxylate transport protein (428 aa).

The next 9 membrane-spanning stretches (helical) occupy residues 5 to 27, 47 to 64, 77 to 99, 141 to 163, 184 to 206, 216 to 238, 289 to 311, 326 to 348, and 353 to 375; these read LFKS…GHYY, MIIA…IAGM, ALLY…VNVV, VIGA…FGFA, VIFG…AMAF, LVQL…VVVL, VVGL…YLTM, IFHQ…GVTG, and VLAA…ILGI.

This sequence belongs to the dicarboxylate/amino acid:cation symporter (DAACS) (TC 2.A.23) family.

The protein localises to the cell inner membrane. Functionally, responsible for the transport of dicarboxylates such as succinate, fumarate, and malate from the periplasm across the membrane. The polypeptide is Aerobic C4-dicarboxylate transport protein (Salmonella typhi).